We begin with the raw amino-acid sequence, 399 residues long: Lipoyl synthase, mitochondrial (399 aa).

The transit peptide at 1–14 (MALISRSCGAASRY) directs the protein to the mitochondrion. Residues 39-52 (AASTSSSSSPSPST) are compositionally biased toward low complexity. The tract at residues 39-60 (AASTSSSSSPSPSTHNDRKKDL) is disordered. [4Fe-4S] cluster is bound by residues Cys128, Cys133, Cys139, Cys159, Cys163, Cys166, and Ser374. A Radical SAM core domain is found at 144–363 (EYATATATIM…EKVGQEMGFI (220 aa)).

The protein belongs to the radical SAM superfamily. Lipoyl synthase family. [4Fe-4S] cluster is required as a cofactor.

The protein localises to the mitochondrion. It catalyses the reaction [[Fe-S] cluster scaffold protein carrying a second [4Fe-4S](2+) cluster] + N(6)-octanoyl-L-lysyl-[protein] + 2 oxidized [2Fe-2S]-[ferredoxin] + 2 S-adenosyl-L-methionine + 4 H(+) = [[Fe-S] cluster scaffold protein] + N(6)-[(R)-dihydrolipoyl]-L-lysyl-[protein] + 4 Fe(3+) + 2 hydrogen sulfide + 2 5'-deoxyadenosine + 2 L-methionine + 2 reduced [2Fe-2S]-[ferredoxin]. The protein operates within protein modification; protein lipoylation via endogenous pathway; protein N(6)-(lipoyl)lysine from octanoyl-[acyl-carrier-protein]: step 2/2. Functionally, catalyzes the radical-mediated insertion of two sulfur atoms into the C-6 and C-8 positions of the octanoyl moiety bound to the lipoyl domains of lipoate-dependent enzymes, thereby converting the octanoylated domains into lipoylated derivatives. This chain is Lipoyl synthase, mitochondrial (lias), found in Danio rerio (Zebrafish).